Reading from the N-terminus, the 85-residue chain is Large ribosomal subunit protein bL27 (85 aa).

It belongs to the bacterial ribosomal protein bL27 family.

This chain is Large ribosomal subunit protein bL27, found in Persephonella marina (strain DSM 14350 / EX-H1).